The chain runs to 96 residues: Aspartyl/glutamyl-tRNA(Asn/Gln) amidotransferase subunit C (96 aa).

It belongs to the GatC family. In terms of assembly, heterotrimer of A, B and C subunits.

The catalysed reaction is L-glutamyl-tRNA(Gln) + L-glutamine + ATP + H2O = L-glutaminyl-tRNA(Gln) + L-glutamate + ADP + phosphate + H(+). It catalyses the reaction L-aspartyl-tRNA(Asn) + L-glutamine + ATP + H2O = L-asparaginyl-tRNA(Asn) + L-glutamate + ADP + phosphate + 2 H(+). Functionally, allows the formation of correctly charged Asn-tRNA(Asn) or Gln-tRNA(Gln) through the transamidation of misacylated Asp-tRNA(Asn) or Glu-tRNA(Gln) in organisms which lack either or both of asparaginyl-tRNA or glutaminyl-tRNA synthetases. The reaction takes place in the presence of glutamine and ATP through an activated phospho-Asp-tRNA(Asn) or phospho-Glu-tRNA(Gln). The chain is Aspartyl/glutamyl-tRNA(Asn/Gln) amidotransferase subunit C from Symbiobacterium thermophilum (strain DSM 24528 / JCM 14929 / IAM 14863 / T).